Here is a 197-residue protein sequence, read N- to C-terminus: Class A basic helix-loop-helix protein 15 (197 aa).

Residues methionine 1 to threonine 12 show a composition bias toward basic residues. Disordered stretches follow at residues methionine 1–arginine 82 and threonine 175–serine 197. 2 positions are modified to phosphothreonine: threonine 12 and threonine 25. Residues aspartate 27–serine 36 are compositionally biased toward polar residues. The segment covering serine 65–arginine 82 has biased composition (basic and acidic residues). Positions glutamine 72–leucine 124 constitute a bHLH domain.

As to quaternary structure, forms homodimers or heterodimers with TCF3 gene products E12 and E47. These dimers bind to the E-box site, however, heterodimer with MYOD1 does not bind target DNA. Expressed in liver, spleen and olfactory epithelium. Weaker expression is seen in skeletal muscle, cardiac muscle, eye and brain tissue.

It localises to the nucleus. In terms of biological role, plays a role in controlling the transcriptional activity of MyoD, ensuring that expanding myoblast populations remain undifferentiated. Repression may occur through muscle-specific E-box occupancy by homodimers. May also negatively regulate bHLH-mediated transcription through an N-terminal repressor domain. Serves as a key regulator of acinar cell function, stability, and identity. Also required for normal organelle localization in exocrine cells and for mitochondrial calcium ion transport. May function as a unique regulator of gene expression in several different embryonic and postnatal cell lineages. Binds to the E-box consensus sequence 5'-CANNTG-3'. This is Class A basic helix-loop-helix protein 15 (Bhlha15) from Rattus norvegicus (Rat).